A 170-amino-acid polypeptide reads, in one-letter code: Large ribosomal subunit protein uL5 (170 aa).

It belongs to the universal ribosomal protein uL5 family. In terms of assembly, part of the 50S ribosomal subunit; contacts the 5S rRNA and probably tRNA. Forms a bridge to the 30S subunit in the 70S ribosome.

In terms of biological role, this is one of the proteins that bind and probably mediate the attachment of the 5S RNA into the large ribosomal subunit, where it forms part of the central protuberance. In the 70S ribosome it contacts protein S13 of the 30S subunit (bridge B1b), connecting the 2 subunits; this bridge is implicated in subunit movement. May contact the P site tRNA; the 5S rRNA and some of its associated proteins might help stabilize positioning of ribosome-bound tRNAs. This is Large ribosomal subunit protein uL5 from Thermoplasma acidophilum (strain ATCC 25905 / DSM 1728 / JCM 9062 / NBRC 15155 / AMRC-C165).